The chain runs to 328 residues: Putative P2Y purinoceptor 10 (328 aa).

At 1–27 (MGSNSTSSAESNCNATYLPFQYSLYAT) the chain is on the extracellular side. N-linked (GlcNAc...) asparagine glycosylation is found at asparagine 4 and asparagine 14. A helical membrane pass occupies residues 28–48 (TYIFIFIPGLLANSAALWVLC). The Cytoplasmic segment spans residues 49–56 (RFISKKNK). Residues 57–77 (AIIFMINLSVADLAHILSLPL) form a helical membrane-spanning segment. At 78-91 (RIYYYINRHWPFQR) the chain is on the extracellular side. A helical membrane pass occupies residues 92–112 (ALCLLCFYLKYLNMYASIFFL). Cysteine 94 and cysteine 170 form a disulfide bridge. Over 113–137 (TCISLQRCLFLLKPFRARNWKRRYD) the chain is Cytoplasmic. Residues 138–158 (VGISAVIWIVVGTACLPFPIL) form a helical membrane-spanning segment. Topologically, residues 159–182 (RNAGLANSTDSCFADLGYKQMDAV) are extracellular. The helical transmembrane segment at 183 to 203 (VLVTMVVIAELAGFVIPVITI) threads the bilayer. Over 204 to 233 (ACCTWKTTVSLKHPPIAFQGISERKKALRM) the chain is Cytoplasmic. The helical transmembrane segment at 234–254 (VFMCAAVFVICFTPYHINFIF) threads the bilayer. The Extracellular portion of the chain corresponds to 255–277 (YTMVKESIITSCPTVKSTLYFHP). The helical transmembrane segment at 278–298 (FSLCLASLCCLLDPILYYFMA) threads the bilayer. Topologically, residues 299–328 (SEFRDQLSRHGSSVTRSRLMSRESGSSMVN) are cytoplasmic.

The protein belongs to the G-protein coupled receptor 1 family.

Its subcellular location is the cell membrane. Putative receptor for purines coupled to G-proteins. The polypeptide is Putative P2Y purinoceptor 10 (P2ry10) (Mus musculus (Mouse)).